The primary structure comprises 108 residues: FK506-binding protein 1 (108 aa).

The 89-residue stretch at 20–108 folds into the PPIase FKBP-type domain; it reads GDSVTIHYVG…KFEVELLKIN (89 aa).

Belongs to the FKBP-type PPIase family. FKBP1 subfamily.

It is found in the cytoplasm. It catalyses the reaction [protein]-peptidylproline (omega=180) = [protein]-peptidylproline (omega=0). Its activity is regulated as follows. Inhibited by both FK506 and rapamycin. PPIases accelerate the folding of proteins. It catalyzes the cis-trans isomerization of proline imidic peptide bonds in oligopeptides. The chain is FK506-binding protein 1 (FPR1) from Cryptococcus neoformans var. neoformans serotype D (strain JEC21 / ATCC MYA-565) (Filobasidiella neoformans).